Here is a 369-residue protein sequence, read N- to C-terminus: tRNA/tmRNA (uracil-C(5))-methyltransferase (369 aa).

Residues Gln192, Tyr221, Asn226, Glu242, and Asp302 each contribute to the S-adenosyl-L-methionine site. Cys327 serves as the catalytic Nucleophile. Glu361 acts as the Proton acceptor in catalysis.

This sequence belongs to the class I-like SAM-binding methyltransferase superfamily. RNA M5U methyltransferase family. TrmA subfamily.

It carries out the reaction uridine(54) in tRNA + S-adenosyl-L-methionine = 5-methyluridine(54) in tRNA + S-adenosyl-L-homocysteine + H(+). The catalysed reaction is uridine(341) in tmRNA + S-adenosyl-L-methionine = 5-methyluridine(341) in tmRNA + S-adenosyl-L-homocysteine + H(+). In terms of biological role, dual-specificity methyltransferase that catalyzes the formation of 5-methyluridine at position 54 (m5U54) in all tRNAs, and that of position 341 (m5U341) in tmRNA (transfer-mRNA). This is tRNA/tmRNA (uracil-C(5))-methyltransferase from Haemophilus ducreyi (strain 35000HP / ATCC 700724).